We begin with the raw amino-acid sequence, 101 residues long: uncharacterized protein (101 aa).

A run of 2 helical transmembrane segments spans residues 3 to 23 (IIGS…AIIF) and 68 to 88 (VIVL…IIVI).

Its subcellular location is the cell membrane. This is an uncharacterized protein from Ureaplasma parvum serovar 3 (strain ATCC 700970).